We begin with the raw amino-acid sequence, 605 residues long: Solute carrier family 23 member 1 (605 aa).

A disordered region spans residues 1–30; that stretch reads MKTPEDPGSPKQHEVVDSAGTSTRDRQAPL. Residues 1-59 are Cytoplasmic-facing; it reads MKTPEDPGSPKQHEVVDSAGTSTRDRQAPLPTEPKFDMLYKIEDVPPWYLCILLGFQHY. The chain crosses the membrane as a helical span at residues 60–80; the sequence is LTCFSGTIAVPFLLAEALCVG. Residues 81–88 lie on the Extracellular side of the membrane; that stretch reads RDQHMVSQ. The chain crosses the membrane as a helical span at residues 89-109; that stretch reads LIGTIFTCVGITTLIQTTVGI. Residue Arg-110 is a topological domain, cytoplasmic. The chain crosses the membrane as a helical span at residues 111 to 131; that stretch reads LPLFQASAFAFLVPAKSILAL. Topologically, residues 132–166 are extracellular; it reads ERWKCPSEEEIYGNWSMPLNTSHIWHPRIREVQGA. Asn-145 and Asn-151 each carry an N-linked (GlcNAc...) asparagine glycan. The helical transmembrane segment at 167-187 threads the bilayer; it reads IMVSSMVEVVIGLMGLPGALL. Topologically, residues 188–214 are cytoplasmic; that stretch reads SYIGPLTVTPTVSLIGLSVFQAAGDRA. A helical transmembrane segment spans residues 215 to 232; the sequence is GSHWGISACSILLIVLFS. Residues 233-236 lie on the Extracellular side of the membrane; that stretch reads QYLR. Positions 237–250 form an intramembrane region, helical; it reads NLTFLLPVYRWGKG. Residues 251–257 are Extracellular-facing; the sequence is LTLFRVQ. The helical transmembrane segment at 258–278 threads the bilayer; sequence IFKMFPIVLAIMTVWLLCYVL. Residues 279 to 319 are Cytoplasmic-facing; it reads TLTDVLPADPTVYGFQARTDARGDIMAISPWIRIPYPCQWG. A helical membrane pass occupies residues 320 to 340; it reads LPTVTVAAVLGMFSATLAGII. Topologically, residues 341–365 are extracellular; sequence ESIGDYYACARLAGAPPPPVHAINR. Residues 366–386 form a helical membrane-spanning segment; sequence GIFTEGICCIIAGLLGTGNGS. At 387–409 the chain is on the cytoplasmic side; the sequence is TSSSPNIGVLGITKVGSRRVVQY. The chain crosses the membrane as a helical span at residues 410–430; it reads GAGIMLILGAIGKFTALFASL. The Extracellular portion of the chain corresponds to 431–433; it reads PDP. Residues 434 to 454 form a helical membrane-spanning segment; the sequence is ILGGMFCTLFGMITAVGLSNL. Residues 455 to 464 lie on the Cytoplasmic side of the membrane; sequence QFVDMNSSRN. Residues 465 to 485 traverse the membrane as a helical segment; that stretch reads LFVLGFSMFFGLTLPNYLDSN. Residues 486–497 are Extracellular-facing; sequence PGAINTGIPEVD. A helical transmembrane segment spans residues 498–518; sequence QILTVLLTTEMFVGGCLAFIL. The Cytoplasmic segment spans residues 519-605; sequence DNTVPGSPEE…IETGSVCTKV (87 aa). Residue Thr-598 is modified to Phosphothreonine. Ser-600 carries the phosphoserine modification. Thr-603 carries the phosphothreonine modification.

The protein belongs to the nucleobase:cation symporter-2 (NCS2) (TC 2.A.40) family. In terms of processing, phosphorylated. In terms of tissue distribution, expressed in kidney (at protein level).

The protein localises to the cell membrane. The enzyme catalyses L-ascorbate(out) + 2 Na(+)(out) = L-ascorbate(in) + 2 Na(+)(in). It catalyses the reaction urate(out) + 2 Na(+)(out) = urate(in) + 2 Na(+)(in). In terms of biological role, sodium:L-ascorbate cotransporter. Mediates electrogenic uptake of vitamin C, with a stoichiometry of 2 Na(+) for each L-ascorbate. Has retained some ancestral activity toward nucleobases such as urate, an oxidized purine. Low-affinity high-capacity sodium:urate cotransporter, may regulate serum urate levels by serving as a renal urate re-absorber. This chain is Solute carrier family 23 member 1 (Slc23a1), found in Mus musculus (Mouse).